The chain runs to 66 residues: Cytochrome c oxidase subunit 26, mitochondrial (66 aa).

The transit peptide at 1 to 8 directs the protein to the mitochondrion; sequence MFFSQVLR. The Mitochondrial matrix portion of the chain corresponds to 9–27; the sequence is SSARAAPIKRYTGGRIGES. The helical transmembrane segment at 28–64 threads the bilayer; that stretch reads WVITEGRRLIPEIFQWSAVLSVCLGWPGAVYFFSKAR. Residues 65-66 are Mitochondrial intermembrane-facing; sequence KA.

The protein belongs to the fungal cytochrome c oxidase subunit 26 family. In terms of assembly, component of the cytochrome c oxidase (complex IV, CIV), a multisubunit enzyme composed of 12 subunits. The complex is composed of a catalytic core of 3 subunits COX1, COX2 and COX3, encoded in the mitochondrial DNA, and 9 supernumerary subunits COX4, COX5A (or COX5B), COX6, COX7, COX8, COX9, COX12, COX13 and COX26, which are encoded in the nuclear genome. The complex exists as a monomer or a dimer and forms supercomplexes (SCs) in the inner mitochondrial membrane with a dimer of ubiquinol-cytochrome c oxidoreductase (cytochrome b-c1 complex, complex III, CIII), resulting in 2 different assemblies (supercomplexes III(2)IV and III(2)IV(2)).

It localises to the mitochondrion inner membrane. Component of the cytochrome c oxidase, the last enzyme in the mitochondrial electron transport chain which drives oxidative phosphorylation. The respiratory chain contains 3 multisubunit complexes succinate dehydrogenase (complex II, CII), ubiquinol-cytochrome c oxidoreductase (cytochrome b-c1 complex, complex III, CIII) and cytochrome c oxidase (complex IV, CIV), that cooperate to transfer electrons derived from NADH and succinate to molecular oxygen, creating an electrochemical gradient over the inner membrane that drives transmembrane transport and the ATP synthase. Cytochrome c oxidase is the component of the respiratory chain that catalyzes the reduction of oxygen to water. Electrons originating from reduced cytochrome c in the intermembrane space (IMS) are transferred via the dinuclear copper A center (CU(A)) of COX2 and heme A of COX1 to the active site in COX1, a binuclear center (BNC) formed by heme A3 and copper B (CU(B)). The BNC reduces molecular oxygen to 2 water molecules using 4 electrons from cytochrome c in the IMS and 4 protons from the mitochondrial matrix. In Saccharomyces cerevisiae (strain ATCC 204508 / S288c) (Baker's yeast), this protein is Cytochrome c oxidase subunit 26, mitochondrial (COX26).